Reading from the N-terminus, the 83-residue chain is Exodeoxyribonuclease 7 small subunit (83 aa).

This sequence belongs to the XseB family. As to quaternary structure, heterooligomer composed of large and small subunits.

The protein localises to the cytoplasm. The catalysed reaction is Exonucleolytic cleavage in either 5'- to 3'- or 3'- to 5'-direction to yield nucleoside 5'-phosphates.. Its function is as follows. Bidirectionally degrades single-stranded DNA into large acid-insoluble oligonucleotides, which are then degraded further into small acid-soluble oligonucleotides. This Bradyrhizobium sp. (strain ORS 278) protein is Exodeoxyribonuclease 7 small subunit.